We begin with the raw amino-acid sequence, 424 residues long: Hemagglutinin-esterase (424 aa).

The first 16 residues, 1–16 (MFLLPRFVLVSCIIGS), serve as a signal peptide directing secretion. The segment at 7-127 (FVLVSCIIGS…SNDIWMQNKG (121 aa)) is esterase domain 1. At 17 to 392 (LGFDNPPTNV…PICVYDPLPI (376 aa)) the chain is on the virion surface side. The active-site Nucleophile is S40. The cysteines at positions 44 and 65 are disulfide-linked. N-linked (GlcNAc...) asparagine; by host glycans are attached at residues N54, N89, N153, N236, and N301. 3 disulfides stabilise this stretch: C113–C162, C197–C276, and C205–C249. Residues 128 to 266 (LFYTQVYKNM…GNYLAISNEL (139 aa)) are receptor binding. Residues 267 to 379 (LLTVPTKAIC…RCPTAADINT (113 aa)) are esterase domain 2. Cysteines 307 and 312 form a disulfide. N316 is a glycosylation site (N-linked (GlcNAc...) asparagine; by host). Catalysis depends on charge relay system residues D326 and H329. C347 and C371 are oxidised to a cystine. N-linked (GlcNAc...) asparagine; by host glycosylation occurs at N358. A helical membrane pass occupies residues 393-413 (ILLGILLGVAVIIIVVLLLYF). Residues 414 to 424 (MVDNGTRLHDA) are Intravirion-facing. Residue N417 is glycosylated (N-linked (GlcNAc...) asparagine; by host).

The protein belongs to the influenza type C/coronaviruses hemagglutinin-esterase family. In terms of assembly, homodimer; disulfide-linked. Forms a complex with the M protein in the pre-Golgi. Associates then with S-M complex to form a ternary complex S-M-HE. In terms of processing, N-glycosylated in the RER. Post-translationally, N-glycosylated in the host RER.

Its subcellular location is the virion membrane. It is found in the host cell membrane. It catalyses the reaction N-acetyl-9-O-acetylneuraminate + H2O = N-acetylneuraminate + acetate + H(+). The enzyme catalyses N-acetyl-4-O-acetylneuraminate + H2O = N-acetylneuraminate + acetate + H(+). Structural protein that makes short spikes at the surface of the virus. Contains receptor binding and receptor-destroying activities. Mediates de-O-acetylation of N-acetyl-4-O-acetylneuraminic acid, which is probably the receptor determinant recognized by the virus on the surface of erythrocytes and susceptible cells. This receptor-destroying activity is important for virus release as it probably helps preventing self-aggregation and ensures the efficient spread of the progeny virus from cell to cell. May serve as a secondary viral attachment protein for initiating infection, the spike protein being the major one. May become a target for both the humoral and the cellular branches of the immune system. The chain is Hemagglutinin-esterase from Bovine coronavirus (strain 98TXSF-110-ENT) (BCoV-ENT).